Consider the following 103-residue polypeptide: Trp operon repressor homolog (103 aa).

Residues 62–85 mediate DNA binding; the sequence is QRKISELLGVGVATITRGSNELKH.

It belongs to the TrpR family. Homodimer.

Its subcellular location is the cytoplasm. In terms of biological role, this protein is an aporepressor. When complexed with L-tryptophan it binds the operator region of the trp operon and prevents the initiation of transcription. The protein is Trp operon repressor homolog of Photobacterium profundum (strain SS9).